Here is a 211-residue protein sequence, read N- to C-terminus: Protein-methionine-sulfoxide reductase heme-binding subunit MsrQ (211 aa).

5 helical membrane-spanning segments follow: residues 10 to 30 (WLKVCLHLAGLLPFLWLVWAI), 82 to 102 (LWCFAWATLHLTSYALLELGV), 116 to 136 (PYLTLGIISWVILLALAFTST), 153 to 173 (FVYLVAILAPIHYLWSVKIIS), and 178 to 198 (IYAGLAVLLLALRYKKLLSLF).

This sequence belongs to the MsrQ family. Heterodimer of a catalytic subunit (MsrP) and a heme-binding subunit (MsrQ). FMN serves as cofactor. The cofactor is heme b.

It is found in the cell inner membrane. Part of the MsrPQ system that repairs oxidized periplasmic proteins containing methionine sulfoxide residues (Met-O), using respiratory chain electrons. Thus protects these proteins from oxidative-stress damage caused by reactive species of oxygen and chlorine generated by the host defense mechanisms. MsrPQ is essential for the maintenance of envelope integrity under bleach stress, rescuing a wide series of structurally unrelated periplasmic proteins from methionine oxidation, including the primary periplasmic chaperone SurA and the lipoprotein Pal. MsrQ provides electrons for reduction to the reductase catalytic subunit MsrP, using the quinone pool of the respiratory chain. The sequence is that of Protein-methionine-sulfoxide reductase heme-binding subunit MsrQ from Escherichia coli (strain 55989 / EAEC).